A 238-amino-acid chain; its full sequence is MFKKLIDKHKKYVYHRINKMALFATIGLLGVGLVYSAKNLYTHQDNQVSIKKSFYLNKKEVRQKLIHEIDVPRILPRLKSEEEKQAESRKKYLNATITYLTEENKKAAKHTKTKKVQKTNTKRNLDKAVSKSTNAKAVKSHEVVATAYTAFCSTGCTGKTRTGYDVSNTSYYNGKRIIAVDPEVIPLYSLVQVSYEGNSFQAYAIDTGGDIKNNRIDILMDSEQEANAFGRKNVRVSW.

The N-terminal stretch at Met1–Ala37 is a signal peptide. The segment covering Thr111–Thr121 has biased composition (basic residues). A disordered region spans residues Thr111–Ser132.

This chain is SPbeta prophage-derived uncharacterized protein YorM (yorM), found in Bacillus subtilis (strain 168).